A 308-amino-acid polypeptide reads, in one-letter code: Olfactory receptor OR9H1 (308 aa).

The Extracellular portion of the chain corresponds to 1 to 26; sequence MVNFTHVSEFVLLGFQGGPGMQAMLF. A helical membrane pass occupies residues 27–47; that stretch reads LIFLILYGIAVVGNLGMIVII. At 48–58 the chain is on the cytoplasmic side; the sequence is WVDAHLHTPMY. A helical transmembrane segment spans residues 59–81; it reads AFLQSLSLLDICYSSTIAPRALA. Residues 82 to 95 are Extracellular-facing; it reads NSMQEDHTISFGGC. Cys95 and Cys177 are oxidised to a cystine. Residues 96–116 form a helical membrane-spanning segment; sequence AAQFFFLSLFGITEAFLLAAM. Residues 117-137 are Cytoplasmic-facing; that stretch reads AYDRFIAICNPLLYSVSMSHQ. A helical membrane pass occupies residues 138–158; sequence VCVLLISGSYLWGVVNAIAQT. The Extracellular portion of the chain corresponds to 159–203; that stretch reads TMTFRLPFCGSNEINDFFCDVPPLLSLSCSDTFINQLVLLGLCGS. A helical transmembrane segment spans residues 204–224; that stretch reads IIVSTFLIVLVSYIYIISTIL. At 225 to 245 the chain is on the cytoplasmic side; it reads RIPTMQGCQKAFSTCASHLTG. A helical transmembrane segment spans residues 246–266; the sequence is VCLFFGTVFFMYAQPSAIFFM. Residues 267-269 are Extracellular-facing; it reads EQS. Residues 270–290 traverse the membrane as a helical segment; that stretch reads KIVSIFYTMVIPMLNPLIYSL. The Cytoplasmic portion of the chain corresponds to 291–308; that stretch reads RNKEVKQALRRSMQKLSL.

It belongs to the G-protein coupled receptor 1 family.

It localises to the cell membrane. Its function is as follows. Odorant receptor. In Homo sapiens (Human), this protein is Olfactory receptor OR9H1.